A 378-amino-acid chain; its full sequence is Ribosomal RNA large subunit methyltransferase G (378 aa).

It belongs to the methyltransferase superfamily. RlmG family.

Its subcellular location is the cytoplasm. It carries out the reaction guanosine(1835) in 23S rRNA + S-adenosyl-L-methionine = N(2)-methylguanosine(1835) in 23S rRNA + S-adenosyl-L-homocysteine + H(+). Specifically methylates the guanine in position 1835 (m2G1835) of 23S rRNA. In Citrobacter koseri (strain ATCC BAA-895 / CDC 4225-83 / SGSC4696), this protein is Ribosomal RNA large subunit methyltransferase G.